Consider the following 434-residue polypeptide: N-acylneuraminate cytidylyltransferase (434 aa).

Residue Met-1 is modified to N-acetylmethionine. Positions 1–42 (MDSVEKGAATSVSNPRGRPSRGRPPKLQRNSRGGQGRGVEKP) are disordered. The BC1 motif signature appears at 15-31 (PRGRPSRGRPPKLQRNS). Omega-N-methylarginine is present on residues Arg-37 and Arg-52. Residues Arg-52, Asn-62, Arg-111, Ser-120, Ser-122, and Gln-143 each contribute to the substrate site. Residues 200–206 (KRPRRQD) carry the BC2 motif motif. The active site involves Arg-201. Positions 269–276 (KEKLKEIK) match the BC3 motif motif.

This sequence belongs to the CMP-NeuNAc synthase family. As to quaternary structure, homotetramer; the active enzyme is formed by a dimer of dimers.

It is found in the nucleus. It catalyses the reaction an N-acylneuraminate + CTP = a CMP-N-acyl-beta-neuraminate + diphosphate. The protein operates within amino-sugar metabolism; N-acetylneuraminate metabolism. In terms of biological role, catalyzes the activation of N-acetylneuraminic acid (NeuNAc) to cytidine 5'-monophosphate N-acetylneuraminic acid (CMP-NeuNAc), a substrate required for the addition of sialic acid. Has some activity toward NeuNAc, N-glycolylneuraminic acid (Neu5Gc) or 2-keto-3-deoxy-D-glycero-D-galacto-nononic acid (KDN). In Bos taurus (Bovine), this protein is N-acylneuraminate cytidylyltransferase (CMAS).